We begin with the raw amino-acid sequence, 643 residues long: 3D-(3,5/4)-trihydroxycyclohexane-1,2-dione hydrolase (643 aa).

E65 contributes to the thiamine diphosphate binding site. Positions 441–521 (SLPGDLQRMW…VNVLLFDNCG (81 aa)) are thiamine pyrophosphate binding. Residues D492 and N519 each coordinate Mg(2+).

This sequence belongs to the TPP enzyme family. Mg(2+) serves as cofactor. It depends on thiamine diphosphate as a cofactor.

The catalysed reaction is 3D-3,5/4-trihydroxycyclohexane-1,2-dione + H2O = 5-deoxy-D-glucuronate + H(+). The protein operates within polyol metabolism; myo-inositol degradation into acetyl-CoA; acetyl-CoA from myo-inositol: step 3/7. Its function is as follows. Involved in the cleavage of the C1-C2 bond of 3D-(3,5/4)-trihydroxycyclohexane-1,2-dione (THcHDO) to yield 5-deoxy-glucuronate (5DG). In Clostridium botulinum (strain Alaska E43 / Type E3), this protein is 3D-(3,5/4)-trihydroxycyclohexane-1,2-dione hydrolase.